Consider the following 117-residue polypeptide: uncharacterized protein (117 aa).

2 consecutive transmembrane segments (helical) span residues 9 to 29 (ITSH…FIPF) and 56 to 76 (VIIV…FFIP).

It localises to the membrane. This is an uncharacterized protein from Saccharomyces cerevisiae (strain ATCC 204508 / S288c) (Baker's yeast).